A 492-amino-acid chain; its full sequence is Probable cytosol aminopeptidase (492 aa).

Mn(2+)-binding residues include lysine 262 and aspartate 267. The active site involves lysine 274. Mn(2+) is bound by residues aspartate 286, aspartate 345, and glutamate 347. Arginine 349 is a catalytic residue.

It belongs to the peptidase M17 family. Mn(2+) is required as a cofactor.

It localises to the cytoplasm. It catalyses the reaction Release of an N-terminal amino acid, Xaa-|-Yaa-, in which Xaa is preferably Leu, but may be other amino acids including Pro although not Arg or Lys, and Yaa may be Pro. Amino acid amides and methyl esters are also readily hydrolyzed, but rates on arylamides are exceedingly low.. It carries out the reaction Release of an N-terminal amino acid, preferentially leucine, but not glutamic or aspartic acids.. In terms of biological role, presumably involved in the processing and regular turnover of intracellular proteins. Catalyzes the removal of unsubstituted N-terminal amino acids from various peptides. The sequence is that of Probable cytosol aminopeptidase from Acaryochloris marina (strain MBIC 11017).